We begin with the raw amino-acid sequence, 209 residues long: Large ribosomal subunit protein uL3 (209 aa).

The tract at residues 128–163 (AHRGPMTHGSKFHRAVGSMGASSDPSRTFKNKRMPG) is disordered.

Belongs to the universal ribosomal protein uL3 family. Part of the 50S ribosomal subunit. Forms a cluster with proteins L14 and L19.

Its function is as follows. One of the primary rRNA binding proteins, it binds directly near the 3'-end of the 23S rRNA, where it nucleates assembly of the 50S subunit. In Clostridium botulinum (strain 657 / Type Ba4), this protein is Large ribosomal subunit protein uL3.